A 388-amino-acid chain; its full sequence is Calreticulin (388 aa).

A signal peptide spans 1 to 17; that stretch reads MQLSLLVGLVCFSAINA. A disulfide bond links Cys-103 and Cys-135. Positions 107, 109, 126, and 133 each coordinate an alpha-D-glucoside. 7 consecutive repeat copies span residues 189-200, 208-219, 225-236, 242-253, 257-267, 271-281, and 285-295. Positions 189–253 are 4 X approximate repeats; that stretch reads AESGELEADW…DAKKPEDWDD (65 aa). The interval 193–282 is disordered; sequence ELEADWDFLP…WKPKQKKNPA (90 aa). Residues 205-215 show a composition bias toward basic and acidic residues; the sequence is KIKDPDAKKPE. The span at 216-227 shows a compositional bias: acidic residues; that stretch reads DWDEREFIDDED. The segment covering 228-249 has biased composition (basic and acidic residues); that stretch reads DKKPEDWDKPEHIPDPDAKKPE. Positions 250-259 are enriched in acidic residues; it reads DWDDEMDGEW. Residues 257-295 are 3 X approximate repeats; that stretch reads GEWEPPMVDNPEYKGEWKPKQKKNPAYKGKWIHPEIEIP. Asp-315 contacts an alpha-D-glucoside. The tract at residues 349-388 is disordered; sequence REGEKKKGKKTKKQKKKEKNEKIKKEKMKKRKRANRKKKK. 2 stretches are compositionally biased toward basic residues: residues 354–365 and 373–388; these read KKGKKTKKQKKK and KEKMKKRKRANRKKKK.

Belongs to the calreticulin family.

The protein resides in the endoplasmic reticulum lumen. In terms of biological role, molecular calcium-binding chaperone promoting folding, oligomeric assembly and quality control in the ER via the calreticulin/calnexin cycle. This lectin may interact transiently with almost all of the monoglucosylated glycoproteins that are synthesized in the ER. The polypeptide is Calreticulin (crt-1) (Onchocerca volvulus).